The chain runs to 378 residues: Probable pectin lyase C (378 aa).

Residues 1 to 18 (MKVPFLQLLCLNAALASA) form the signal peptide. Disulfide bonds link cysteine 81–cysteine 100 and cysteine 90–cysteine 220. The N-linked (GlcNAc...) asparagine glycan is linked to asparagine 123. Arginine 250 is a catalytic residue. Cysteine 316 and cysteine 324 form a disulfide bridge.

It belongs to the polysaccharide lyase 1 family.

It localises to the secreted. The enzyme catalyses Eliminative cleavage of (1-&gt;4)-alpha-D-galacturonan methyl ester to give oligosaccharides with 4-deoxy-6-O-methyl-alpha-D-galact-4-enuronosyl groups at their non-reducing ends.. Its function is as follows. Pectinolytic enzymes consist of four classes of enzymes: pectin lyase, polygalacturonase, pectin methylesterase and rhamnogalacturonase. Among pectinolytic enzymes, pectin lyase is the most important in depolymerization of pectin, since it cleaves internal glycosidic bonds of highly methylated pectins. The protein is Probable pectin lyase C (pelC) of Aspergillus niger.